The following is a 288-amino-acid chain: Orotidine 5'-phosphate decarboxylase (288 aa).

K99 (proton donor) is an active-site residue.

This sequence belongs to the OMP decarboxylase family. Type 2 subfamily.

It catalyses the reaction orotidine 5'-phosphate + H(+) = UMP + CO2. It participates in pyrimidine metabolism; UMP biosynthesis via de novo pathway; UMP from orotate: step 2/2. This chain is Orotidine 5'-phosphate decarboxylase (pyrF), found in Myxococcus xanthus (strain DK1622).